The following is a 719-amino-acid chain: Polyribonucleotide nucleotidyltransferase (719 aa).

Mg(2+) contacts are provided by D507 and D513. Residues 573-633 (PKLELFSVDP…EQIKAAKDYI (61 aa)) enclose the KH domain. The S1 motif domain occupies 658 to 719 (GQEFQGIVKK…NGKISVDLCE (62 aa)).

Belongs to the polyribonucleotide nucleotidyltransferase family. Mg(2+) is required as a cofactor.

Its subcellular location is the cytoplasm. The catalysed reaction is RNA(n+1) + phosphate = RNA(n) + a ribonucleoside 5'-diphosphate. Functionally, involved in mRNA degradation. Catalyzes the phosphorolysis of single-stranded polyribonucleotides processively in the 3'- to 5'-direction. The protein is Polyribonucleotide nucleotidyltransferase of Campylobacter jejuni subsp. jejuni serotype O:23/36 (strain 81-176).